The following is a 175-amino-acid chain: CEN-like protein 4 (175 aa).

The protein belongs to the phosphatidylethanolamine-binding protein family. Expressed in vegetative axillary meristems but not in the main shoot meristem.

It localises to the cytoplasm. May form complexes with phosphorylated ligands by interfering with kinases and their effectors. The polypeptide is CEN-like protein 4 (CET4) (Nicotiana tabacum (Common tobacco)).